The chain runs to 417 residues: Glutamate-1-semialdehyde 2,1-aminomutase (417 aa).

An N6-(pyridoxal phosphate)lysine modification is found at lysine 263.

Belongs to the class-III pyridoxal-phosphate-dependent aminotransferase family. HemL subfamily. Pyridoxal 5'-phosphate serves as cofactor.

Its subcellular location is the cytoplasm. The enzyme catalyses (S)-4-amino-5-oxopentanoate = 5-aminolevulinate. It functions in the pathway porphyrin-containing compound metabolism; protoporphyrin-IX biosynthesis; 5-aminolevulinate from L-glutamyl-tRNA(Glu): step 2/2. This is Glutamate-1-semialdehyde 2,1-aminomutase from Methanospirillum hungatei JF-1 (strain ATCC 27890 / DSM 864 / NBRC 100397 / JF-1).